The sequence spans 157 residues: SsrA-binding protein (157 aa).

The interval 133 to 157 is disordered; the sequence is LHDKRESEKKRDWGREKGRLLRARG. Residues 135 to 151 are compositionally biased toward basic and acidic residues; the sequence is DKRESEKKRDWGREKGR.

This sequence belongs to the SmpB family.

It is found in the cytoplasm. Required for rescue of stalled ribosomes mediated by trans-translation. Binds to transfer-messenger RNA (tmRNA), required for stable association of tmRNA with ribosomes. tmRNA and SmpB together mimic tRNA shape, replacing the anticodon stem-loop with SmpB. tmRNA is encoded by the ssrA gene; the 2 termini fold to resemble tRNA(Ala) and it encodes a 'tag peptide', a short internal open reading frame. During trans-translation Ala-aminoacylated tmRNA acts like a tRNA, entering the A-site of stalled ribosomes, displacing the stalled mRNA. The ribosome then switches to translate the ORF on the tmRNA; the nascent peptide is terminated with the 'tag peptide' encoded by the tmRNA and targeted for degradation. The ribosome is freed to recommence translation, which seems to be the essential function of trans-translation. This Nitrobacter winogradskyi (strain ATCC 25391 / DSM 10237 / CIP 104748 / NCIMB 11846 / Nb-255) protein is SsrA-binding protein.